The following is a 455-amino-acid chain: Chromosomal replication initiator protein DnaA (455 aa).

Residues 1–75 form a domain I, interacts with DnaA modulators region; the sequence is MDTNNNIEKE…EILSQNKVGM (75 aa). The interval 75-106 is domain II; sequence MHLAHSVDVRIEVAPKIQISTQSNINYKATKM. Positions 107–321 are domain III, AAA+ region; it reads SVKDSYTFEN…GAIIKISVNA (215 aa). 4 residues coordinate ATP: G151, G153, K154, and T155. The tract at residues 322–455 is domain IV, binds dsDNA; that stretch reads NLMNASIDLN…DKKTAFNSSE (134 aa).

This sequence belongs to the DnaA family. As to quaternary structure, oligomerizes as a right-handed, spiral filament on DNA at oriC.

It is found in the cytoplasm. Its function is as follows. Plays an essential role in the initiation and regulation of chromosomal replication. ATP-DnaA binds to the origin of replication (oriC) to initiate formation of the DNA replication initiation complex once per cell cycle. Binds the DnaA box (a 9 base pair repeat at the origin) and separates the double-stranded (ds)DNA. Forms a right-handed helical filament on oriC DNA; dsDNA binds to the exterior of the filament while single-stranded (ss)DNA is stabiized in the filament's interior. The ATP-DnaA-oriC complex binds and stabilizes one strand of the AT-rich DNA unwinding element (DUE), permitting loading of DNA polymerase. After initiation quickly degrades to an ADP-DnaA complex that is not apt for DNA replication. Binds acidic phospholipids. This is Chromosomal replication initiator protein DnaA from Helicobacter pylori (strain HPAG1).